The sequence spans 76 residues: Large ribosomal subunit protein uL30 (76 aa).

It belongs to the universal ribosomal protein uL30 family. In terms of assembly, part of the 50S ribosomal subunit.

The chain is Large ribosomal subunit protein uL30 from Anaeromyxobacter dehalogenans (strain 2CP-1 / ATCC BAA-258).